The chain runs to 54 residues: Protein YojO (54 aa).

The protein belongs to the YojO family.

The protein is Protein YojO (yojO) of Escherichia coli (strain K12).